Here is a 283-residue protein sequence, read N- to C-terminus: Flagellar filament 35 kDa core protein (283 aa).

This sequence belongs to the bacterial flagellin family. In terms of assembly, the flagellum consists of two outer layers around a core that contains several antigenically related polypeptides.

The protein localises to the periplasmic flagellum. It is found in the periplasm. Component of the core of the flagella. The sequence is that of Flagellar filament 35 kDa core protein (flaB) from Leptospira interrogans serogroup Icterohaemorrhagiae serovar Lai (strain 56601).